The chain runs to 583 residues: MRKHPQTATKHLFVSGGVASSLGKGLTASSLGQLLTARGLYVTMQKLDPYLNVDPGTMNPFQHGEVFVTEDGAETDLDVGHYERFLDRDLSGSANVTTGQVYSTVIAKERRGEYLGDTVQVIPHITDEIKGRILAMAQPDAQGNRPDVVITEIGGTVGDIESQPFLEAARQVRHDLGRENVFFLHVSLVPYLAPSGELKTKPTQHSVAALRSIGITPDALILRCDRDVPEALKNKIALMCDVDIDGVISTPDAPSIYDIPKVLHREELDAYVVRRLNLPFRDVDWTEWDDLLRRVHEPHETVRIALVGKYVELSDAYLSVTEALRAGGFFHHAKVEMVWVASDDCESASGAAAALGEVHGVLIPGGFGIRGIEGKIGAIHYARTRGLPVLGLCLGLQCIVIEAARAAGLAGANSAEFDPDTPDPVISTMADQVDIVAGAADLGGTMRLGAYPAVLEEDSIVARAYGTTQVSERHRHRYEVNNAYRDKIAESGLRFSGTSPDGHLVEFVEYPPDVHPFIVGTQAHPELKSRPTRPHPLFVAFVGAAMDYKAGELLPVEIPEQSSNGIQHRDSAARPIPEPAARG.

Residues 1–278 (MRKHPQTATK…DAYVVRRLNL (278 aa)) are amidoligase domain. Residue Ser-20 participates in CTP binding. Ser-20 provides a ligand contact to UTP. ATP contacts are provided by residues 21-26 (SLGKGL) and Asp-78. Mg(2+) contacts are provided by Asp-78 and Glu-152. Residues 159-161 (DIE), 199-204 (KTKPTQ), and Lys-235 each bind CTP. UTP-binding positions include 199–204 (KTKPTQ) and Lys-235. The 249-residue stretch at 303-551 (RIALVGKYVE…VGAAMDYKAG (249 aa)) folds into the Glutamine amidotransferase type-1 domain. Gly-366 serves as a coordination point for L-glutamine. Cys-393 serves as the catalytic Nucleophile; for glutamine hydrolysis. L-glutamine-binding positions include 394–397 (LGLQ), Glu-416, and Arg-477. Residues His-524 and Glu-526 contribute to the active site. The disordered stretch occupies residues 560-583 (EQSSNGIQHRDSAARPIPEPAARG).

The protein belongs to the CTP synthase family. As to quaternary structure, homotetramer.

It catalyses the reaction UTP + L-glutamine + ATP + H2O = CTP + L-glutamate + ADP + phosphate + 2 H(+). The enzyme catalyses L-glutamine + H2O = L-glutamate + NH4(+). It carries out the reaction UTP + NH4(+) + ATP = CTP + ADP + phosphate + 2 H(+). The protein operates within pyrimidine metabolism; CTP biosynthesis via de novo pathway; CTP from UDP: step 2/2. Allosterically activated by GTP, when glutamine is the substrate; GTP has no effect on the reaction when ammonia is the substrate. The allosteric effector GTP functions by stabilizing the protein conformation that binds the tetrahedral intermediate(s) formed during glutamine hydrolysis. Inhibited by the product CTP, via allosteric rather than competitive inhibition. In terms of biological role, catalyzes the ATP-dependent amination of UTP to CTP with either L-glutamine or ammonia as the source of nitrogen. Regulates intracellular CTP levels through interactions with the four ribonucleotide triphosphates. This chain is CTP synthase, found in Mycolicibacterium paratuberculosis (strain ATCC BAA-968 / K-10) (Mycobacterium paratuberculosis).